A 480-amino-acid chain; its full sequence is Probable E3 ubiquitin protein ligase DRIPH (480 aa).

Residues 16–57 form an RING-type zinc finger; sequence CPICTNPFKDATTISECLHTFCRSCIRNKFINERVNACPVCN. Disordered stretches follow at residues 93 to 133, 167 to 193, 241 to 261, and 280 to 356; these read GPKT…EPAN, RGRK…PKIK, TPPD…ESVE, and VNQN…EMKV. Positions 103–112 are enriched in basic residues; it reads SSKKKRKSRT. Residues 113–133 are compositionally biased toward low complexity; the sequence is SLRVSSSRVSSSPDTPLEPAN. Basic and acidic residues predominate over residues 175–193; the sequence is KKIDSKPEPELPPKEPKIK. Over residues 246 to 260 the composition is skewed to acidic residues; the sequence is VEPEISSDDDTEESV. Polar residues predominate over residues 298 to 309; it reads GQKLKTNGAATS.

The enzyme catalyses S-ubiquitinyl-[E2 ubiquitin-conjugating enzyme]-L-cysteine + [acceptor protein]-L-lysine = [E2 ubiquitin-conjugating enzyme]-L-cysteine + N(6)-ubiquitinyl-[acceptor protein]-L-lysine.. The protein operates within protein modification; protein ubiquitination. This Arabidopsis thaliana (Mouse-ear cress) protein is Probable E3 ubiquitin protein ligase DRIPH.